The chain runs to 418 residues: MTLLALGINHKTAPVSLRERVTFSPDTLDQALDSLLAQPMVQGGVVLSTCNRTELYLSVEEQDNLQEALIRWLCDYHNLNEDDLRNSLYWHQDNDAVSHLMRVASGLDSLVLGEPQILGQVKKAFADSQKGHLNASALERMFQKSFSVAKRVRTETDIGASAVSVAFAACTLARQIFESLSTVTVLLVGAGETIELVARHLREHKVQKMIIANRTRERAQALTDEVGAEVISLSDIDARLQDADIIISSTASPLPIIGKGMVERALKSRRNQPMLLVDIAVPRDVEPEVGKLANAYLYSVDDLQSIISHNLAQRQAAAVEAETIVEQEASEFMAWLRAQGASETIREYRSQSEQIRDELTTKALSALQQGGDAQAILQDLAWKLTNRLIHAPTKSLQQAARDGDDERLNILRDSLGLE.

Residues 49 to 52, Ser109, 114 to 116, and Gln120 each bind substrate; these read TCNR and EPQ. Cys50 serves as the catalytic Nucleophile. NADP(+) is bound at residue 189-194; that stretch reads GAGETI.

The protein belongs to the glutamyl-tRNA reductase family. As to quaternary structure, homodimer.

The enzyme catalyses (S)-4-amino-5-oxopentanoate + tRNA(Glu) + NADP(+) = L-glutamyl-tRNA(Glu) + NADPH + H(+). Its pathway is porphyrin-containing compound metabolism; protoporphyrin-IX biosynthesis; 5-aminolevulinate from L-glutamyl-tRNA(Glu): step 1/2. Catalyzes the NADPH-dependent reduction of glutamyl-tRNA(Glu) to glutamate 1-semialdehyde (GSA). The polypeptide is Glutamyl-tRNA reductase (Salmonella dublin (strain CT_02021853)).